Consider the following 60-residue polypeptide: UPF0434 protein Bpro_2950 (60 aa).

It belongs to the UPF0434 family.

This is UPF0434 protein Bpro_2950 from Polaromonas sp. (strain JS666 / ATCC BAA-500).